An 892-amino-acid polypeptide reads, in one-letter code: Alanine--tRNA ligase (892 aa).

Residues histidine 577, histidine 581, cysteine 680, and histidine 684 each contribute to the Zn(2+) site.

It belongs to the class-II aminoacyl-tRNA synthetase family. The cofactor is Zn(2+).

The protein localises to the cytoplasm. The catalysed reaction is tRNA(Ala) + L-alanine + ATP = L-alanyl-tRNA(Ala) + AMP + diphosphate. In terms of biological role, catalyzes the attachment of alanine to tRNA(Ala) in a two-step reaction: alanine is first activated by ATP to form Ala-AMP and then transferred to the acceptor end of tRNA(Ala). Also edits incorrectly charged Ser-tRNA(Ala) and Gly-tRNA(Ala) via its editing domain. In Paenarthrobacter aurescens (strain TC1), this protein is Alanine--tRNA ligase.